The sequence spans 133 residues: Nickel-responsive regulator (133 aa).

Ni(2+) contacts are provided by His-76, His-87, His-89, and Cys-95.

Belongs to the transcriptional regulatory CopG/NikR family. Homotetramer. Ni(2+) serves as cofactor.

In terms of biological role, transcriptional repressor of the nikABCDE operon. Is active in the presence of excessive concentrations of intracellular nickel. This chain is Nickel-responsive regulator, found in Escherichia coli (strain SMS-3-5 / SECEC).